Here is a 467-residue protein sequence, read N- to C-terminus: Asparagine--tRNA ligase (467 aa).

The protein belongs to the class-II aminoacyl-tRNA synthetase family. As to quaternary structure, homodimer.

The protein localises to the cytoplasm. The enzyme catalyses tRNA(Asn) + L-asparagine + ATP = L-asparaginyl-tRNA(Asn) + AMP + diphosphate + H(+). This Legionella pneumophila (strain Corby) protein is Asparagine--tRNA ligase.